Here is a 180-residue protein sequence, read N- to C-terminus: Small ribosomal subunit protein uS4 (180 aa).

The S4 RNA-binding domain occupies 103 to 174 (RRLQTLVFKK…HPERMVIEEV (72 aa)).

Belongs to the universal ribosomal protein uS4 family. As to quaternary structure, part of the 30S ribosomal subunit. Contacts protein S5. The interaction surface between S4 and S5 is involved in control of translational fidelity.

One of the primary rRNA binding proteins, it binds directly to 16S rRNA where it nucleates assembly of the body of the 30S subunit. In terms of biological role, with S5 and S12 plays an important role in translational accuracy. This chain is Small ribosomal subunit protein uS4, found in Thermococcus sibiricus (strain DSM 12597 / MM 739).